Here is a 201-residue protein sequence, read N- to C-terminus: Large ribosomal subunit protein bL25 (201 aa).

It belongs to the bacterial ribosomal protein bL25 family. CTC subfamily. As to quaternary structure, part of the 50S ribosomal subunit; part of the 5S rRNA/L5/L18/L25 subcomplex. Contacts the 5S rRNA. Binds to the 5S rRNA independently of L5 and L18.

In terms of biological role, this is one of the proteins that binds to the 5S RNA in the ribosome where it forms part of the central protuberance. This is Large ribosomal subunit protein bL25 from Aromatoleum aromaticum (strain DSM 19018 / LMG 30748 / EbN1) (Azoarcus sp. (strain EbN1)).